The sequence spans 241 residues: 1-(5-phosphoribosyl)-5-[(5-phosphoribosylamino)methylideneamino] imidazole-4-carboxamide isomerase (241 aa).

Asp-10 serves as the catalytic Proton acceptor. The active-site Proton donor is Asp-131.

Belongs to the HisA/HisF family.

It localises to the cytoplasm. It carries out the reaction 1-(5-phospho-beta-D-ribosyl)-5-[(5-phospho-beta-D-ribosylamino)methylideneamino]imidazole-4-carboxamide = 5-[(5-phospho-1-deoxy-D-ribulos-1-ylimino)methylamino]-1-(5-phospho-beta-D-ribosyl)imidazole-4-carboxamide. Its pathway is amino-acid biosynthesis; L-histidine biosynthesis; L-histidine from 5-phospho-alpha-D-ribose 1-diphosphate: step 4/9. The chain is 1-(5-phosphoribosyl)-5-[(5-phosphoribosylamino)methylideneamino] imidazole-4-carboxamide isomerase from Hyphomonas neptunium (strain ATCC 15444).